The chain runs to 266 residues: HTH-type transcriptional regulator MurR (266 aa).

The 77-residue stretch at 1 to 77 folds into the HTH rpiR-type domain; that stretch reads MLYLTKIRNA…MALIGEYSAS (77 aa). Positions 37–56 form a DNA-binding region, H-T-H motif; sequence SRQMAKQLGISQSSIVKFAQ. One can recognise an SIS domain in the interval 128–266; it reads IIEVISKAPF…LLFVGLVQHQ (139 aa).

Homotetramer.

It functions in the pathway amino-sugar metabolism; N-acetylmuramate degradation [regulation]. Its function is as follows. Represses the expression of the murPQ operon involved in the uptake and degradation of N-acetylmuramic acid (MurNAc). Binds to two adjacent inverted repeats within the operator region. MurNAc 6-phosphate, the substrate of MurQ, is the specific inducer that weakens binding of MurR to the operator. The chain is HTH-type transcriptional regulator MurR from Shigella flexneri serotype 5b (strain 8401).